Reading from the N-terminus, the 453-residue chain is Alpha-2B adrenergic receptor (453 aa).

Residues 1–17 (MSGPTMDHQEPYSVQAT) lie on the Extracellular side of the membrane. Residues 18 to 42 (AAIASAITFLILFTIFGNALVILAV) traverse the membrane as a helical segment. The Cytoplasmic segment spans residues 43–54 (LTSRSLRAPQNL). A helical transmembrane segment spans residues 55–80 (FLVSLAAADILVATLIIPFSLANELL). The Extracellular segment spans residues 81-90 (GYWYFWRAWC). An intrachain disulfide couples Cys-90 to Cys-169. Residues 91 to 113 (EVYLALDVLFCTSSIVHLCAISL) traverse the membrane as a helical segment. Over 114-135 (DRYWAVSRALEYNSKRTPRRIK) the chain is Cytoplasmic. Residues 136-158 (CIILTVWLIAAVISLPPLIYKGD) traverse the membrane as a helical segment. Residues 159–174 (QRPEPRGLPQCELNQE) lie on the Extracellular side of the membrane. Residues 175 to 198 (AWYILASSIGSFFAPCLIMILVYL) traverse the membrane as a helical segment. Residues 199–375 (RIYVIAKRSH…LSREKRFTFV (177 aa)) lie on the Cytoplasmic side of the membrane. Positions 213-331 (GAKRGSGEGE…PASVCNPPLQ (119 aa)) are disordered. A compositionally biased stretch (polar residues) spans 287–297 (GQGQKKGTSGA). The span at 300–314 (EEGDEEDEEEVEECE) shows a compositional bias: acidic residues. A helical transmembrane segment spans residues 376-399 (LAVVIGVFVVCWFPFFFSYSLGAI). The Extracellular portion of the chain corresponds to 400–408 (CPQHCKVPH). Residues 409-432 (GLFQFFFWIGYCNSSLNPVIYTVF) traverse the membrane as a helical segment. Topologically, residues 433 to 453 (NQDFRRAFRRILCRPWTQTGW) are cytoplasmic. Cys-445 is lipidated: S-palmitoyl cysteine.

It belongs to the G-protein coupled receptor 1 family. Adrenergic receptor subfamily. ADRA2B sub-subfamily. Interacts with RAB26. Interacts with PPP1R9B. Interacts with GGA1, GGA2 and GGA3.

The protein resides in the cell membrane. Its function is as follows. Alpha-2 adrenergic receptors mediate the catecholamine-induced inhibition of adenylate cyclase through the action of G proteins. The sequence is that of Alpha-2B adrenergic receptor (Adra2b) from Rattus norvegicus (Rat).